We begin with the raw amino-acid sequence, 79 residues long: Acyl carrier protein (79 aa).

The 76-residue stretch at 2–77 folds into the Carrier domain; it reads SDVLERVRKI…DAVKFIQERL (76 aa). Ser37 bears the O-(pantetheine 4'-phosphoryl)serine mark.

The protein belongs to the acyl carrier protein (ACP) family. Post-translationally, 4'-phosphopantetheine is transferred from CoA to a specific serine of apo-ACP by AcpS. This modification is essential for activity because fatty acids are bound in thioester linkage to the sulfhydryl of the prosthetic group.

The protein resides in the cytoplasm. It functions in the pathway lipid metabolism; fatty acid biosynthesis. Its function is as follows. Carrier of the growing fatty acid chain in fatty acid biosynthesis. This chain is Acyl carrier protein, found in Phenylobacterium zucineum (strain HLK1).